Here is a 329-residue protein sequence, read N- to C-terminus: Peroxidase 5 (329 aa).

The first 26 residues, 1-26, serve as a signal peptide directing secretion; that stretch reads MSSKRVTWLSLTWVLVFLCLSVELEA. Q27 carries the post-translational modification Pyrrolidone carboxylic acid. 4 cysteine pairs are disulfide-bonded: C37/C117, C70/C75, C123/C324, and C202/C234. H68 (proton acceptor) is an active-site residue. Ca(2+) contacts are provided by D69, V72, G74, D76, and S78. A substrate-binding site is contributed by P165. H195 is a binding site for heme b. A Ca(2+)-binding site is contributed by T196. Residue N213 is glycosylated (N-linked (GlcNAc...) asparagine). The Ca(2+) site is built by S251 and D256.

Belongs to the peroxidase family. Classical plant (class III) peroxidase subfamily. Requires heme b as cofactor. It depends on Ca(2+) as a cofactor.

The protein localises to the secreted. It carries out the reaction 2 a phenolic donor + H2O2 = 2 a phenolic radical donor + 2 H2O. Its function is as follows. Removal of H(2)O(2), oxidation of toxic reductants, biosynthesis and degradation of lignin, suberization, auxin catabolism, response to environmental stresses such as wounding, pathogen attack and oxidative stress. These functions might be dependent on each isozyme/isoform in each plant tissue. The sequence is that of Peroxidase 5 from Vitis vinifera (Grape).